Reading from the N-terminus, the 684-residue chain is Pheromone-processing carboxypeptidase KEX1 (684 aa).

The N-terminal stretch at 1-16 is a signal peptide; that stretch reads MRFWYFSAILWVVCQA. At 17–588 the chain is on the lumenal side; sequence LPSKKQYSVA…QRKRRKGTFK (572 aa). Residues serine 181 and aspartate 390 contribute to the active site. N-linked (GlcNAc...) asparagine glycosylation is found at asparagine 443 and asparagine 451. Residue histidine 454 is part of the active site. A disordered region spans residues 498-582; that stretch reads DNSKLGVLGI…KEEQDRQRKR (85 aa). Positions 514–547 are enriched in acidic residues; sequence EEEELEEEFDQYVDELEEGESESGLLDDDKEDET. Over residues 554 to 578 the composition is skewed to basic and acidic residues; sequence NDDKNKGGEDKPNENPDKEKEEQDR. The helical transmembrane segment at 589–609 threads the bilayer; it reads IFGITILVVLTLGSFVFYIYI. The Cytoplasmic segment spans residues 610–684; sequence RKHTNKTRAI…LDESFELENL (75 aa). The tract at residues 641–684 is disordered; the sequence is LEHGYDFETDQSQPRSGQSAPKKNGSYTRVPNTELDESFELENL. Over residues 650 to 671 the composition is skewed to polar residues; that stretch reads DQSQPRSGQSAPKKNGSYTRVP. Residues 674–684 are compositionally biased toward acidic residues; that stretch reads ELDESFELENL.

Belongs to the peptidase S10 family.

The protein localises to the golgi apparatus. It localises to the trans-Golgi network membrane. It catalyses the reaction Preferential release of a C-terminal arginine or lysine residue.. Functionally, protease with a carboxypeptidase B-like function involved in the C-terminal processing of the lysine and arginine residues from protein precursors. Promotes cell fusion and is involved in the programmed cell death. The protein is Pheromone-processing carboxypeptidase KEX1 (KEX1) of Zygosaccharomyces rouxii (strain ATCC 2623 / CBS 732 / NBRC 1130 / NCYC 568 / NRRL Y-229).